A 300-amino-acid chain; its full sequence is Large ribosomal subunit protein bL9m (300 aa).

The protein belongs to the bacterial ribosomal protein bL9 family. As to quaternary structure, component of the mitochondrial large ribosomal subunit (mt-LSU). Mature N.crassa 74S mitochondrial ribosomes consist of a small (37S) and a large (54S) subunit. The 37S small subunit contains a 16S ribosomal RNA (16S mt-rRNA) and 32 different proteins. The 54S large subunit contains a 23S rRNA (23S mt-rRNA) and 42 different proteins.

It localises to the mitochondrion. Functionally, component of the mitochondrial ribosome (mitoribosome), a dedicated translation machinery responsible for the synthesis of mitochondrial genome-encoded proteins, including at least some of the essential transmembrane subunits of the mitochondrial respiratory chain. The mitoribosomes are attached to the mitochondrial inner membrane and translation products are cotranslationally integrated into the membrane. This Neurospora crassa (strain ATCC 24698 / 74-OR23-1A / CBS 708.71 / DSM 1257 / FGSC 987) protein is Large ribosomal subunit protein bL9m (mrpl50).